Consider the following 311-residue polypeptide: Porphobilinogen deaminase (311 aa).

S-(dipyrrolylmethanemethyl)cysteine is present on Cys-240.

This sequence belongs to the HMBS family. As to quaternary structure, monomer. Requires dipyrromethane as cofactor.

It catalyses the reaction 4 porphobilinogen + H2O = hydroxymethylbilane + 4 NH4(+). Its pathway is porphyrin-containing compound metabolism; protoporphyrin-IX biosynthesis; coproporphyrinogen-III from 5-aminolevulinate: step 2/4. Tetrapolymerization of the monopyrrole PBG into the hydroxymethylbilane pre-uroporphyrinogen in several discrete steps. The polypeptide is Porphobilinogen deaminase (Natranaerobius thermophilus (strain ATCC BAA-1301 / DSM 18059 / JW/NM-WN-LF)).